The chain runs to 528 residues: Phosphoenolpyruvate carboxykinase (ATP) (528 aa).

Residues Arg56, Tyr192, and Lys198 each coordinate substrate. ATP contacts are provided by residues Lys198, His217, and 233 to 241 (GLSGTGKTT). Mn(2+) is bound by residues Lys198 and His217. Asp254 provides a ligand contact to Mn(2+). 3 residues coordinate ATP: Glu282, Arg319, and Thr444. Arg319 serves as a coordination point for substrate.

It belongs to the phosphoenolpyruvate carboxykinase (ATP) family. Requires Mn(2+) as cofactor.

The protein localises to the cytoplasm. The enzyme catalyses oxaloacetate + ATP = phosphoenolpyruvate + ADP + CO2. It participates in carbohydrate biosynthesis; gluconeogenesis. Its function is as follows. Involved in the gluconeogenesis. Catalyzes the conversion of oxaloacetate (OAA) to phosphoenolpyruvate (PEP) through direct phosphoryl transfer between the nucleoside triphosphate and OAA. This chain is Phosphoenolpyruvate carboxykinase (ATP), found in Bacillus cereus (strain B4264).